Consider the following 217-residue polypeptide: Non-structural protein NS3 (217 aa).

The protein belongs to the orbivirus NS3 family.

Functionally, may play a role in the release of virions from infected cells. In African horse sickness virus 6 (AHSV-6), this protein is Non-structural protein NS3 (Segment-10).